The primary structure comprises 475 residues: Ankyrin repeat, SAM and basic leucine zipper domain-containing protein 1 (475 aa).

Positions 1 to 22 (MAAGALRGLPVAGGGESSESED) are disordered. A phosphoserine mark is found at Ser-17, Ser-18, and Ser-20. 6 ANK repeats span residues 45–74 (EKKE…SVDS), 78–107 (YGWT…NASF), 110–144 (DKQT…DPNV), 148–177 (RLMT…EVNT), 181–210 (NGYT…NKML), and 214–243 (DGKM…PLEG). Residues 272 to 334 (SYTAFGDLEV…KILATLKELQ (63 aa)) enclose the SAM domain.

As to quaternary structure, interacts with DDX4, PIWIL1, RANBP9 and TDRD1.

The protein resides in the cytoplasm. Plays a central role during spermatogenesis by repressing transposable elements and preventing their mobilization, which is essential for the germline integrity. Acts via the piRNA metabolic process, which mediates the repression of transposable elements during meiosis by forming complexes composed of piRNAs and Piwi proteins and governs the methylation and subsequent repression of transposons. Its association with pi-bodies suggests a participation in the primary piRNAs metabolic process. Required prior to the pachytene stage to facilitate the production of multiple types of piRNAs, including those associated with repeats involved in the regulation of retrotransposons. May act by mediating protein-protein interactions during germ cell maturation. The protein is Ankyrin repeat, SAM and basic leucine zipper domain-containing protein 1 (ASZ1) of Colobus guereza (Mantled guereza).